We begin with the raw amino-acid sequence, 382 residues long: Succinyl-diaminopimelate desuccinylase (382 aa).

Residue H71 coordinates Zn(2+). D73 is a catalytic residue. D105 lines the Zn(2+) pocket. The active-site Proton acceptor is E139. The Zn(2+) site is built by E140, E168, and H354.

This sequence belongs to the peptidase M20A family. DapE subfamily. In terms of assembly, homodimer. Requires Zn(2+) as cofactor. Co(2+) is required as a cofactor.

It catalyses the reaction N-succinyl-(2S,6S)-2,6-diaminopimelate + H2O = (2S,6S)-2,6-diaminopimelate + succinate. It participates in amino-acid biosynthesis; L-lysine biosynthesis via DAP pathway; LL-2,6-diaminopimelate from (S)-tetrahydrodipicolinate (succinylase route): step 3/3. Functionally, catalyzes the hydrolysis of N-succinyl-L,L-diaminopimelic acid (SDAP), forming succinate and LL-2,6-diaminopimelate (DAP), an intermediate involved in the bacterial biosynthesis of lysine and meso-diaminopimelic acid, an essential component of bacterial cell walls. The sequence is that of Succinyl-diaminopimelate desuccinylase from Stutzerimonas stutzeri (strain A1501) (Pseudomonas stutzeri).